Consider the following 346-residue polypeptide: MTSQDNDHTAQTPARVLSGIQPTADSYHLGNYLGAVKQWIDLQNSYDAFYFIPDLHAITVDQNPEELRARTVSGAAQLLALGIDPERSTLFVQSHIPAHAELSWVLTCLTGFGEASRMTQFKDKSTKQGAERTSAGLFTYPMLMAADILLYRPQLVPVGEDQRQHLELTRTLAERFNNRFGTVFEVPEGFIPEGASKIYDLQNPTAKMSKSGENPKGLINLLDDPKVSSKRIKSAVTDNDGVIAFDVANKPGVSNLLVIQSALTGESVDKLVAGYEGKGYGALKTDTADALEAFTTPLRAKYDEYMSDRAELERVLAIGAERAGEIATKVLAEVYDKIGFLAPRSR.

ATP is bound by residues 21–23 and 30–31; these read QPT and GN. A 'HIGH' region motif is present at residues 22–31; sequence PTADSYHLGN. Asp147 is a binding site for L-tryptophan. ATP is bound by residues 159–161, Ile198, and 207–211; these read GED and KMSKS. Residues 207–211 carry the 'KMSKS' region motif; that stretch reads KMSKS.

Belongs to the class-I aminoacyl-tRNA synthetase family. Homodimer.

The protein resides in the cytoplasm. The catalysed reaction is tRNA(Trp) + L-tryptophan + ATP = L-tryptophyl-tRNA(Trp) + AMP + diphosphate + H(+). Catalyzes the attachment of tryptophan to tRNA(Trp). The sequence is that of Tryptophan--tRNA ligase from Corynebacterium efficiens (strain DSM 44549 / YS-314 / AJ 12310 / JCM 11189 / NBRC 100395).